The primary structure comprises 497 residues: Glycerol kinase 2 (497 aa).

Thr13 serves as a coordination point for ADP. Thr13, Thr14, and Ser15 together coordinate ATP. A sn-glycerol 3-phosphate-binding site is contributed by Thr13. Residue Arg17 participates in ADP binding. Residues Arg83, Glu84, Tyr134, and Asp241 each coordinate sn-glycerol 3-phosphate. Glycerol is bound by residues Arg83, Glu84, Tyr134, Asp241, and Gln242. ADP-binding residues include Thr263 and Gly305. Residues Thr263, Gly305, Gln309, and Gly406 each coordinate ATP. 2 residues coordinate ADP: Gly406 and Asn410.

Belongs to the FGGY kinase family.

It carries out the reaction glycerol + ATP = sn-glycerol 3-phosphate + ADP + H(+). The protein operates within polyol metabolism; glycerol degradation via glycerol kinase pathway; sn-glycerol 3-phosphate from glycerol: step 1/1. Key enzyme in the regulation of glycerol uptake and metabolism. Catalyzes the phosphorylation of glycerol to yield sn-glycerol 3-phosphate. The chain is Glycerol kinase 2 from Sulfolobus acidocaldarius (strain ATCC 33909 / DSM 639 / JCM 8929 / NBRC 15157 / NCIMB 11770).